The following is a 524-amino-acid chain: CTP synthase (524 aa).

The segment at 1-263 is amidoligase domain; sequence MKKYVIVTGG…HEKIASKLNV (263 aa). Serine 13 is a CTP binding site. Serine 13 is a binding site for UTP. ATP is bound by residues 14 to 19 and aspartate 71; that span reads GIGKGI. Aspartate 71 and glutamate 137 together coordinate Mg(2+). Residues 144–146, 184–189, and lysine 220 contribute to the CTP site; these read DIE and KTKPTQ. UTP-binding positions include 184 to 189 and lysine 220; that span reads KTKPTQ. One can recognise a Glutamine amidotransferase type-1 domain in the interval 282–524; that stretch reads RIALVGKYLG…YLRKVLEGSQ (243 aa). Glycine 342 is an L-glutamine binding site. Cysteine 369 acts as the Nucleophile; for glutamine hydrolysis in catalysis. Residues 370–373, glutamate 393, and arginine 451 each bind L-glutamine; that span reads LGMQ. Catalysis depends on residues histidine 499 and glutamate 501.

This sequence belongs to the CTP synthase family. Homotetramer.

It catalyses the reaction UTP + L-glutamine + ATP + H2O = CTP + L-glutamate + ADP + phosphate + 2 H(+). The enzyme catalyses L-glutamine + H2O = L-glutamate + NH4(+). The catalysed reaction is UTP + NH4(+) + ATP = CTP + ADP + phosphate + 2 H(+). Its pathway is pyrimidine metabolism; CTP biosynthesis via de novo pathway; CTP from UDP: step 2/2. Its activity is regulated as follows. Allosterically activated by GTP, when glutamine is the substrate; GTP has no effect on the reaction when ammonia is the substrate. The allosteric effector GTP functions by stabilizing the protein conformation that binds the tetrahedral intermediate(s) formed during glutamine hydrolysis. Inhibited by the product CTP, via allosteric rather than competitive inhibition. In terms of biological role, catalyzes the ATP-dependent amination of UTP to CTP with either L-glutamine or ammonia as the source of nitrogen. Regulates intracellular CTP levels through interactions with the four ribonucleotide triphosphates. The chain is CTP synthase from Thermotoga maritima (strain ATCC 43589 / DSM 3109 / JCM 10099 / NBRC 100826 / MSB8).